The chain runs to 128 residues: DNA-directed RNA polymerase subunit omega (128 aa).

The protein belongs to the RNA polymerase subunit omega family. As to quaternary structure, the RNAP catalytic core consists of 2 alpha, 1 beta, 1 beta' and 1 omega subunit. When a sigma factor is associated with the core the holoenzyme is formed, which can initiate transcription.

The enzyme catalyses RNA(n) + a ribonucleoside 5'-triphosphate = RNA(n+1) + diphosphate. In terms of biological role, promotes RNA polymerase assembly. Latches the N- and C-terminal regions of the beta' subunit thereby facilitating its interaction with the beta and alpha subunits. The chain is DNA-directed RNA polymerase subunit omega from Azorhizobium caulinodans (strain ATCC 43989 / DSM 5975 / JCM 20966 / LMG 6465 / NBRC 14845 / NCIMB 13405 / ORS 571).